We begin with the raw amino-acid sequence, 257 residues long: UPF0246 protein Spea_1078 (257 aa).

It belongs to the UPF0246 family.

This is UPF0246 protein Spea_1078 from Shewanella pealeana (strain ATCC 700345 / ANG-SQ1).